Consider the following 120-residue polypeptide: Small ribosomal subunit protein uS13 (120 aa).

The segment at 94–120 is disordered; the sequence is GLPLRGQRTRTNARTRKGPRKAIAGKK.

This sequence belongs to the universal ribosomal protein uS13 family. In terms of assembly, part of the 30S ribosomal subunit. Forms a loose heterodimer with protein S19. Forms two bridges to the 50S subunit in the 70S ribosome.

Its function is as follows. Located at the top of the head of the 30S subunit, it contacts several helices of the 16S rRNA. In the 70S ribosome it contacts the 23S rRNA (bridge B1a) and protein L5 of the 50S subunit (bridge B1b), connecting the 2 subunits; these bridges are implicated in subunit movement. Contacts the tRNAs in the A and P-sites. The chain is Small ribosomal subunit protein uS13 from Aromatoleum aromaticum (strain DSM 19018 / LMG 30748 / EbN1) (Azoarcus sp. (strain EbN1)).